The following is a 472-amino-acid chain: MAETLEAVEDAVDILEKEMLSFCNLIPVNSWGFDDDVKESLKMRKHSLVNRQLSKKERKSMSAQQKQHLAKGLGLVPNTVQEVLEWMSKSKQHSKVQPQKVVAPVKRPADQNKNKEKVVKKDQKKQDKKADSDSEEDDSSDDEEKEETDEPVAKKQKKEESSDDDEDSEDGEEPEGNNGAVEAEDSDSTDEEEETPSKPNKTVAQSTLKSNGKIDKEIQKLEDDEDNESPEIRRQIALLRLQKKLKEMKVERKGKGPAKVTSAMAEKMAEEKRLKRRESKLKLKQRRAEEKKGKEAAAQVKKETVESTENGNEPVEKQKSGISFNNLKFEIKEDKQRGKKQRTAKKDRALKLTGRDYKSLIAKVEETKATIAKVREADPHKATIMEDELKWEKTLKRAAGGKVKDNLGMLKKALVKKNKMKDRRKQKWENRENKTEGEKQTKQDKRKKNLQKRIDDVKKRKMNKLRNKGRIL.

Disordered regions lie at residues 53-73, 89-232, 249-350, and 414-472; these read LSKKERKSMSAQQKQHLAKGL, KSKQ…SPEI, KVER…DRAL, and LVKK…GRIL. Residues 95 to 106 show a composition bias toward low complexity; sequence KVQPQKVVAPVK. A compositionally biased stretch (basic and acidic residues) spans 107-132; it reads RPADQNKNKEKVVKKDQKKQDKKADS. Residues 133–150 are compositionally biased toward acidic residues; that stretch reads DSEEDDSSDDEEKEETDE. A compositionally biased stretch (basic and acidic residues) spans 151-160; the sequence is PVAKKQKKEE. Composition is skewed to acidic residues over residues 161–175 and 182–194; these read SSDDDEDSEDGEEPE and EAEDSDSTDEEEE. Over residues 197–210 the composition is skewed to polar residues; sequence SKPNKTVAQSTLKS. Over residues 212–221 the composition is skewed to basic and acidic residues; sequence GKIDKEIQKL. Positions 274–285 are enriched in basic residues; it reads LKRRESKLKLKQ. Over residues 286–305 the composition is skewed to basic and acidic residues; it reads RRAEEKKGKEAAAQVKKETV. The span at 414 to 426 shows a compositional bias: basic residues; it reads LVKKNKMKDRRKQ. Residues 427–443 show a composition bias toward basic and acidic residues; the sequence is KWENRENKTEGEKQTKQ. Residues 459–472 are compositionally biased toward basic residues; it reads KRKMNKLRNKGRIL.

This sequence belongs to the SURF6 family.

The protein localises to the nucleus. Its subcellular location is the nucleoplasm. In terms of biological role, binds to both DNA and RNA in vitro, with a stronger binding capacity for RNA. May represent a nucleolar constitutive protein involved in ribosomal biosynthesis or assembly. The protein is SURF6 homolog gldi-11 of Caenorhabditis elegans.